A 235-amino-acid polypeptide reads, in one-letter code: Ribosome maturation factor RimM (235 aa).

Residues 1 to 19 (MKHEEANKEIGGRGAEGQR) show a composition bias toward basic and acidic residues. The disordered stretch occupies residues 1–49 (MKHEEANKEIGGRGAEGQRSKRVGGNSKIQNIQSPAPNPQPIVPNTQSP). Residues 150 to 230 (EDEYHVLDLI…RIEITPPPGL (81 aa)) enclose the PRC barrel domain.

It belongs to the RimM family. Binds ribosomal protein uS19.

It localises to the cytoplasm. An accessory protein needed during the final step in the assembly of 30S ribosomal subunit, possibly for assembly of the head region. Essential for efficient processing of 16S rRNA. May be needed both before and after RbfA during the maturation of 16S rRNA. It has affinity for free ribosomal 30S subunits but not for 70S ribosomes. The chain is Ribosome maturation factor RimM from Nostoc punctiforme (strain ATCC 29133 / PCC 73102).